A 575-amino-acid polypeptide reads, in one-letter code: Proline--tRNA ligase 1 (575 aa).

This sequence belongs to the class-II aminoacyl-tRNA synthetase family. ProS type 1 subfamily. In terms of assembly, homodimer.

It is found in the cytoplasm. The catalysed reaction is tRNA(Pro) + L-proline + ATP = L-prolyl-tRNA(Pro) + AMP + diphosphate. In terms of biological role, catalyzes the attachment of proline to tRNA(Pro) in a two-step reaction: proline is first activated by ATP to form Pro-AMP and then transferred to the acceptor end of tRNA(Pro). As ProRS can inadvertently accommodate and process non-cognate amino acids such as alanine and cysteine, to avoid such errors it has two additional distinct editing activities against alanine. One activity is designated as 'pretransfer' editing and involves the tRNA(Pro)-independent hydrolysis of activated Ala-AMP. The other activity is designated 'posttransfer' editing and involves deacylation of mischarged Ala-tRNA(Pro). The misacylated Cys-tRNA(Pro) is not edited by ProRS. The polypeptide is Proline--tRNA ligase 1 (Anaeromyxobacter dehalogenans (strain 2CP-C)).